The chain runs to 72 residues: Heat-stable enterotoxin A3/A4 (72 aa).

The first 19 residues, 1–19, serve as a signal peptide directing secretion; that stretch reads MKKSILFIFLSVLSFSPFA. A propeptide spanning residues 20-53 is cleaved from the precursor; that stretch reads QDAKPVESSKEKITLESKKCNIAKKSNKSGPESM. Cystine bridges form between cysteine 59-cysteine 64, cysteine 60-cysteine 68, and cysteine 63-cysteine 71.

The protein belongs to the heat-stable enterotoxin family.

It is found in the secreted. Functionally, toxin which activates the particulate form of guanylate cyclase and increases cyclic GMP levels within the host intestinal epithelial cells. This chain is Heat-stable enterotoxin A3/A4 (sta3), found in Escherichia coli.